The sequence spans 405 residues: Coiled-coil domain-containing protein 91 (405 aa).

The segment at M1–D16 is GGA1-binding motif. Residues M1–P27 form a disordered region. Residues S43 and S46 each carry the phosphoserine modification. Positions G126–Q376 form a coiled coil. Residues L210–R377 are homodimerization.

As to quaternary structure, homodimer. Interacts with GGA1, GGA2 and AP1G1.

It is found in the membrane. Its subcellular location is the golgi apparatus. The protein resides in the trans-Golgi network membrane. The protein localises to the trans-Golgi network. Functionally, involved in the regulation of membrane traffic through the trans-Golgi network (TGN). Functions in close cooperation with the GGAs in the sorting of hydrolases to lysosomes. This Pongo abelii (Sumatran orangutan) protein is Coiled-coil domain-containing protein 91 (CCDC91).